Here is a 312-residue protein sequence, read N- to C-terminus: uncharacterized protein (312 aa).

10 helical membrane-spanning segments follow: residues 11-31 (IAAI…KIAL), 46-66 (IAFA…SIRV), 72-92 (ILPL…FGLV), 98-118 (EAGI…AYVL), 128-148 (GFTV…GVDV), 155-171 (GSLL…MYNT), 183-203 (TELT…IALV), 221-241 (PGFV…TSFL), 254-274 (MSAF…VILN), and 277-297 (LAWY…GSNI). 2 EamA domains span residues 18–142 (FIIG…FIFV) and 164–297 (LSSA…GSNI).

This sequence belongs to the EamA transporter family.

The protein resides in the cell membrane. This is an uncharacterized protein from Bacillus subtilis (strain 168).